The chain runs to 718 residues: Tensin-4 (718 aa).

Residues Met1–Leu14 form the signal peptide. Disordered regions lie at residues Arg188 to Ala244 and Leu272 to Met437. The segment covering Ser192 to Gly207 has biased composition (polar residues). A compositionally biased stretch (low complexity) spans Ser208–Ser219. A Phosphoserine modification is found at Ser230. The span at Leu272–Ser304 shows a compositional bias: low complexity. 4 stretches are compositionally biased toward polar residues: residues Cys306–Ser316, Gln337–Met349, Pro367–Lys393, and Thr405–Lys415. The 108-residue stretch at Trp451–Gln558 folds into the SH2 domain. One can recognise a PTB domain in the interval Cys585–Leu711.

Belongs to the PTEN phosphatase protein family. Interacts (via SH2 domain) with Rho GTPase-activating protein DLC1 (via C-terminus); the interaction is independent of DLC1 tyrosine phosphorylation. Interacts with integrin ITGB1; the interaction displaces tensin TNS3 from the ITGB1 cytoplasmic tail and promotes ITGB1 stability. Interacts (via SH2 domain) with E3 ubiquitin-protein ligase CBL (phosphorylated on 'Tyr-781'); the interaction is enhanced in the presence of EGF and reduces interaction of CBL with EGFR. Interacts (via SH2 domain) with receptor tyrosine kinase MET (when phosphorylated); the interaction increases MET protein stability.

The protein localises to the cell junction. It is found in the focal adhesion. The protein resides in the cytoplasm. Its subcellular location is the cytoskeleton. Its function is as follows. Promotes EGF-induced cell migration by displacing tensin TNS3 from the cytoplasmic tail of integrin ITGB1 which results in dissociation of TNS3 from focal adhesions, disassembly of actin stress fibers and initiation of cell migration. Suppresses ligand-induced degradation of EGFR by reducing EGFR ubiquitination in the presence of EGF. Increases MET protein stability by inhibiting MET endocytosis and subsequent lysosomal degradation which leads to increased cell survival, proliferation and migration. The polypeptide is Tensin-4 (Tns4) (Rattus norvegicus (Rat)).